Here is a 155-residue protein sequence, read N- to C-terminus: MKLQLVAVGTKMPDWVQTGFSEYLRRFPKDMPFELVEIPAGKRGKNADIKRILEKEGEMMLAAAGKNRIVTLDIPGKPWDTPQLARELERWKQDGRDVSLLVGGPEGLSPACKAAAEQSWSLSTLTLPHPLVRVLVAESLYRAWSITTNHPYHRE.

Residues Leu72, Gly103, and 122–127 (LSTLTL) contribute to the S-adenosyl-L-methionine site.

It belongs to the RNA methyltransferase RlmH family. Homodimer.

The protein localises to the cytoplasm. It catalyses the reaction pseudouridine(1915) in 23S rRNA + S-adenosyl-L-methionine = N(3)-methylpseudouridine(1915) in 23S rRNA + S-adenosyl-L-homocysteine + H(+). Functionally, specifically methylates the pseudouridine at position 1915 (m3Psi1915) in 23S rRNA. The protein is Ribosomal RNA large subunit methyltransferase H of Klebsiella pneumoniae (strain 342).